Consider the following 320-residue polypeptide: Ferrochelatase (320 aa).

Fe cation contacts are provided by His-194 and Glu-275.

This sequence belongs to the ferrochelatase family. In terms of assembly, monomer.

Its subcellular location is the cytoplasm. The catalysed reaction is heme b + 2 H(+) = protoporphyrin IX + Fe(2+). It functions in the pathway porphyrin-containing compound metabolism; protoheme biosynthesis; protoheme from protoporphyrin-IX: step 1/1. Functionally, catalyzes the ferrous insertion into protoporphyrin IX. The polypeptide is Ferrochelatase (Salmonella dublin (strain CT_02021853)).